The primary structure comprises 76 residues: Bowman-Birk type proteinase inhibitor DE-3 (76 aa).

7 disulfides stabilise this stretch: Cys-16-Cys-70, Cys-17-Cys-32, Cys-20-Cys-66, Cys-22-Cys-30, Cys-40-Cys-47, Cys-44-Cys-59, and Cys-49-Cys-57.

It belongs to the Bowman-Birk serine protease inhibitor family.

The chain is Bowman-Birk type proteinase inhibitor DE-3 from Macrotyloma axillare (Perennial horse gram).